A 246-amino-acid polypeptide reads, in one-letter code: Proteasome subunit alpha type-6 (246 aa).

The protein belongs to the peptidase T1A family. As to quaternary structure, the 26S proteasome consists of a 20S proteasome core and two 19S regulatory subunits. The 20S proteasome core is composed of 28 subunits that are arranged in four stacked rings, resulting in a barrel-shaped structure. The two end rings are each formed by seven alpha subunits, and the two central rings are each formed by seven beta subunits. The catalytic chamber with the active sites is on the inside of the barrel.

The protein resides in the cytoplasm. The protein localises to the nucleus. The proteasome is a multicatalytic proteinase complex which is characterized by its ability to cleave peptides with Arg, Phe, Tyr, Leu, and Glu adjacent to the leaving group at neutral or slightly basic pH. The proteasome has an ATP-dependent proteolytic activity. This chain is Proteasome subunit alpha type-6 (pas-1), found in Caenorhabditis elegans.